A 97-amino-acid chain; its full sequence is MIKYILGIVIFIAIVLVAITIGANNDQIITFNYIVAESQFQLSSLVAILFGLGLILGWLITAFFYIKLKLKNMALARQVKRQTLQINELTTTRDKVV.

A run of 2 helical transmembrane segments spans residues 1–21 (MIKY…AITI) and 46–66 (VAIL…FFYI). The stretch at 67–95 (KLKLKNMALARQVKRQTLQINELTTTRDK) forms a coiled coil.

This sequence belongs to the LapA family.

Its subcellular location is the cell inner membrane. In terms of biological role, involved in the assembly of lipopolysaccharide (LPS). The sequence is that of Probable lipopolysaccharide assembly protein A from Haemophilus influenzae (strain ATCC 51907 / DSM 11121 / KW20 / Rd).